The following is a 301-amino-acid chain: GPN-loop GTPase 3 (301 aa).

Gly-13–Thr-18 provides a ligand contact to GTP. The Gly-Pro-Asn (GPN)-loop; involved in dimer interface signature appears at Gly-70–Asn-72. Ser-176–Asp-179 provides a ligand contact to GTP. Residues Ile-212–Val-232 are disordered. Basic and acidic residues predominate over residues Ser-223–Val-232.

This sequence belongs to the GPN-loop GTPase family. As to quaternary structure, heterodimers with GPN1 or GPN2. Binds to RNA polymerase II (RNAPII).

Small GTPase required for proper nuclear import of RNA polymerase II and III (RNAPII and RNAPIII). May act at an RNAP assembly step prior to nuclear import. This Gibberella zeae (strain ATCC MYA-4620 / CBS 123657 / FGSC 9075 / NRRL 31084 / PH-1) (Wheat head blight fungus) protein is GPN-loop GTPase 3.